We begin with the raw amino-acid sequence, 282 residues long: BURP domain-containing protein BNM2A (282 aa).

The N-terminal stretch at 1 to 26 (MASLRFSVTFPALLSLLLLSLWVVEA) is a signal peptide. In terms of domain architecture, BURP spans 60–282 (FFKISDLKLG…PLDNIVWVSK (223 aa)).

Expressed in the radicle and cotyledon of germinating seeds 2 days post-imbibition (DPI), in stems and roots of 30-DPI young plants and in floral buds, but not in fully open flowers or leaves. Expressed in the embryo and seed coat tissues of developing seeds. The protein accumulates only in seeds and only long after transcript accumulation becomes evident.

The protein localises to the protein storage vacuole. This is BURP domain-containing protein BNM2A from Brassica napus (Rape).